Reading from the N-terminus, the 472-residue chain is Siroheme synthase 1 (472 aa).

Positions 1–203 (MDYLPLFADL…GQLAQAEEEL (203 aa)) are precorrin-2 dehydrogenase /sirohydrochlorin ferrochelatase. Residues 22-23 (EV) and 43-44 (QT) each bind NAD(+). Phosphoserine is present on serine 128. Residues 215–472 (GEVALVGAGP…AISPSVVNLA (258 aa)) are uroporphyrinogen-III C-methyltransferase. Position 224 (proline 224) interacts with S-adenosyl-L-methionine. The active-site Proton acceptor is the aspartate 247. Lysine 269 serves as the catalytic Proton donor. Residues 300-302 (GGD), isoleucine 305, 330-331 (TA), methionine 382, and glycine 411 contribute to the S-adenosyl-L-methionine site.

It in the N-terminal section; belongs to the precorrin-2 dehydrogenase / sirohydrochlorin ferrochelatase family. This sequence in the C-terminal section; belongs to the precorrin methyltransferase family.

The catalysed reaction is uroporphyrinogen III + 2 S-adenosyl-L-methionine = precorrin-2 + 2 S-adenosyl-L-homocysteine + H(+). It carries out the reaction precorrin-2 + NAD(+) = sirohydrochlorin + NADH + 2 H(+). The enzyme catalyses siroheme + 2 H(+) = sirohydrochlorin + Fe(2+). It participates in cofactor biosynthesis; adenosylcobalamin biosynthesis; precorrin-2 from uroporphyrinogen III: step 1/1. Its pathway is cofactor biosynthesis; adenosylcobalamin biosynthesis; sirohydrochlorin from precorrin-2: step 1/1. It functions in the pathway porphyrin-containing compound metabolism; siroheme biosynthesis; precorrin-2 from uroporphyrinogen III: step 1/1. The protein operates within porphyrin-containing compound metabolism; siroheme biosynthesis; siroheme from sirohydrochlorin: step 1/1. It participates in porphyrin-containing compound metabolism; siroheme biosynthesis; sirohydrochlorin from precorrin-2: step 1/1. Functionally, multifunctional enzyme that catalyzes the SAM-dependent methylations of uroporphyrinogen III at position C-2 and C-7 to form precorrin-2 via precorrin-1. Then it catalyzes the NAD-dependent ring dehydrogenation of precorrin-2 to yield sirohydrochlorin. Finally, it catalyzes the ferrochelation of sirohydrochlorin to yield siroheme. The protein is Siroheme synthase 1 of Yersinia enterocolitica serotype O:8 / biotype 1B (strain NCTC 13174 / 8081).